The following is a 60-amino-acid chain: DNA-directed RNA polymerase subunit Rpo6 (60 aa).

It belongs to the archaeal Rpo6/eukaryotic RPB6 RNA polymerase subunit family. As to quaternary structure, part of the RNA polymerase complex.

It localises to the cytoplasm. The enzyme catalyses RNA(n) + a ribonucleoside 5'-triphosphate = RNA(n+1) + diphosphate. In terms of biological role, DNA-dependent RNA polymerase (RNAP) catalyzes the transcription of DNA into RNA using the four ribonucleoside triphosphates as substrates. The polypeptide is DNA-directed RNA polymerase subunit Rpo6 (Methanosarcina acetivorans (strain ATCC 35395 / DSM 2834 / JCM 12185 / C2A)).